A 208-amino-acid chain; its full sequence is Large ribosomal subunit protein uL4 (208 aa).

The interval 47–84 (ARAARERSDVARTGKKFGRQKGGGTARHGDRRAPVFIG) is disordered. Residues 49–58 (AARERSDVAR) show a composition bias toward basic and acidic residues.

Belongs to the universal ribosomal protein uL4 family. Part of the 50S ribosomal subunit.

Its function is as follows. One of the primary rRNA binding proteins, this protein initially binds near the 5'-end of the 23S rRNA. It is important during the early stages of 50S assembly. It makes multiple contacts with different domains of the 23S rRNA in the assembled 50S subunit and ribosome. Functionally, forms part of the polypeptide exit tunnel. This chain is Large ribosomal subunit protein uL4, found in Rhizorhabdus wittichii (strain DSM 6014 / CCUG 31198 / JCM 15750 / NBRC 105917 / EY 4224 / RW1) (Sphingomonas wittichii).